The sequence spans 102 residues: Large ribosomal subunit protein uL24 (102 aa).

Belongs to the universal ribosomal protein uL24 family. As to quaternary structure, part of the 50S ribosomal subunit.

In terms of biological role, one of two assembly initiator proteins, it binds directly to the 5'-end of the 23S rRNA, where it nucleates assembly of the 50S subunit. One of the proteins that surrounds the polypeptide exit tunnel on the outside of the subunit. This is Large ribosomal subunit protein uL24 from Paraburkholderia xenovorans (strain LB400).